The sequence spans 513 residues: RNA-binding protein FUS (513 aa).

Positions 1–14 (MASNDYTQQATQSY) are enriched in polar residues. The tract at residues 1–273 (MASNDYTQQA…SEQDNSDNNT (273 aa)) is disordered. Low complexity-rich tracts occupy residues 20–36 (QPGQ…YGQQ), 43–63 (QSTD…GQTQ), and 84–124 (SSQS…SGYG). Residues 125–139 (QPQGGGYGQQSGYGG) show a composition bias toward gly residues. The segment covering 140 to 164 (QQQSYGQQQSYNPPQGYGQQSQYNS) has biased composition (low complexity). Composition is skewed to gly residues over residues 165 to 176 (SGGGGGGGGGSY) and 185 to 219 (SGGG…GGGY). Asymmetric dimethylarginine; alternate is present on residues Arg211 and Arg213. 2 positions are modified to omega-N-methylarginine; alternate: Arg211 and Arg213. Asymmetric dimethylarginine is present on residues Arg229, Arg231, Arg235, Arg238, and Arg246. Residues 231-246 (RGGGRGGRGGMGGSDR) are compositionally biased toward gly residues. Phosphoserine is present on Ser264. Positions 272–358 (NTIFVQGLGE…NPIKVSFATR (87 aa)) constitute an RRM domain. At Thr273 the chain carries Phosphothreonine. Lys321 is covalently cross-linked (Glycyl lysine isopeptide (Lys-Gly) (interchain with G-Cter in SUMO2)). Phosphoserine is present on Ser327. 2 disordered regions span residues 362–411 (FNRG…QRAG) and 431–513 (CNQC…ERPY). Arg364, Arg370, Arg373, Arg375, and Arg381 each carry asymmetric dimethylarginine. A compositionally biased stretch (gly residues) spans 364-408 (RGGGNGRGGRGRGGPMGRGGYGGGGSGGGGRGGFPSGGGGGGGQQ). An Asymmetric dimethylarginine; alternate modification is found at Arg394. Arg394 is modified (omega-N-methylarginine; alternate). The segment at 409-440 (RAGDWKCPNPTCENMNFSWRNECNQCKAPKPD) adopts a RanBP2-type zinc-finger fold. The span at 441-455 (GPGGGPGGSHMGGNY) shows a compositional bias: gly residues. The span at 456–480 (GDDRRGGRGGYDRGGYRGRGGDRGG) shows a compositional bias: basic and acidic residues. An asymmetric dimethylarginine mark is found at Arg460, Arg463, Arg468, Arg472, Arg474, Arg478, Arg482, and Arg485. A compositionally biased stretch (gly residues) spans 481 to 495 (FRGGRGGGDRGGFGP). An Asymmetric dimethylarginine; alternate modification is found at Arg490. Arg490 is subject to Omega-N-methylarginine; alternate. Positions 498-513 (MDSRGEHRQDRRERPY) are enriched in basic and acidic residues.

Belongs to the RRM TET family. As to quaternary structure, self-oligomerizes (via N-terminal region). Oligomerization is essential for chromatin binding. Component of nuclear riboprotein complexes. Interacts with ILF3, TDRD3 and SF1. Interacts through its C-terminus with SFRS13A. Interacts with OTUB1 and SARNP. Interacts with LRSAM1. Interacts with SAFB1 in a DNA-dependent manner; this interaction tethers FUS to chromatin. Interacts with MATR3. Interacts with SNRNP70 and POLR2A; these interactions couple RNA transcription and splicing. Interacts (through its RNA-binding domain) with RALY (through its RNA-binding domain); both are components of the same RNPs. Post-translationally, phosphorylated in its N-terminal serine residues upon induced DNA damage. ATM and DNA-PK are able to phosphorylate FUS N-terminal region.

Its subcellular location is the nucleus. Functionally, DNA/RNA-binding protein that plays a role in various cellular processes such as transcription regulation, RNA splicing, RNA transport, DNA repair and damage response. Binds to ssRNA containing the consensus sequence 5'-AGGUAA-3'. Binds to nascent pre-mRNAs and acts as a molecular mediator between RNA polymerase II and U1 small nuclear ribonucleoprotein thereby coupling transcription and splicing. Also binds its own pre-mRNA and autoregulates its expression; this autoregulation mechanism is mediated by non-sense-mediated decay. Plays a role in DNA repair mechanisms by promoting D-loop formation and homologous recombination during DNA double-strand break repair. In neuronal cells, plays crucial roles in dendritic spine formation and stability, RNA transport, mRNA stability and synaptic homeostasis. The sequence is that of RNA-binding protein FUS (FUS) from Bos taurus (Bovine).